A 201-amino-acid polypeptide reads, in one-letter code: Recombination protein RecR (201 aa).

Residues 57 to 72 (CADCRTFTEQEVCNIC) form a C4-type zinc finger. The Toprim domain occupies 81–176 (GQICVVESPA…EASRIAHGVP (96 aa)).

Belongs to the RecR family.

May play a role in DNA repair. It seems to be involved in an RecBC-independent recombinational process of DNA repair. It may act with RecF and RecO. The polypeptide is Recombination protein RecR (Shigella boydii serotype 4 (strain Sb227)).